Here is a 288-residue protein sequence, read N- to C-terminus: HTH-type transcriptional regulator CzcR (288 aa).

The region spanning 1 to 58 (MELRDLQIFKCVAHHKSITGAAKELNYVQSNVTARIKQLENELKTPLFNRHKKGVSLS) is the HTH lysR-type domain. The segment at residues 18–37 (ITGAAKELNYVQSNVTARIK) is a DNA-binding region (H-T-H motif).

Belongs to the LysR transcriptional regulatory family.

This chain is HTH-type transcriptional regulator CzcR (czcR), found in Bacillus subtilis (strain 168).